A 506-amino-acid polypeptide reads, in one-letter code: UDP-N-acetylglucosamine--peptide N-acetylglucosaminyltransferase GtfA subunit (506 aa).

Residue 16-19 (GVEY) participates in UDP binding. Histidine 241 is a binding site for N-acetyl-D-glucosamine. 384–385 (HK) is a binding site for UDP. Residue 404–407 (EGFG) participates in N-acetyl-D-glucosamine binding.

Belongs to the glycosyltransferase group 1 family. Glycosyltransferase 4 subfamily. As to quaternary structure, interacts with stabilizing protein GtfB (Gtf2), probably as a heterotetramer with 2 subunits each of GtfA and GtfB, part of the accessory SecA2/SecY2 protein translocation apparatus.

It localises to the cytoplasm. The protein localises to the cell membrane. The catalysed reaction is L-seryl-[protein] + UDP-N-acetyl-alpha-D-glucosamine = 3-O-[N-acetyl-alpha-D-glucosaminyl]-L-seryl-[protein] + UDP + H(+). The protein operates within protein modification; protein glycosylation. In terms of biological role, required for polymorphic O-glycosylation of the serine-rich repeat protein Srr2. Catalyzes the first step in glycosylation by transferring N-acetylglucosamine from UDP-GlcNAc to serine residues of Srr2. Part of the accessory SecA2/SecY2 system specifically required to export serine-rich repeat proteins, probably Srr2 in this organism. The GtfA-GtfB (Gtf1-Gtf2 in this bacteria) complex adds GlcNAc from UDP-GlcNAc to Srr2 substrate. This subunit has low glycosyltransferase activity; GtfB enhances glycosyltransferase activity in vitro. Upon expression in S.parasanguis GtfA/GtfB restores expression of serine-rich repeat protein Fap1 and complements a biofilm formation defect. The polypeptide is UDP-N-acetylglucosamine--peptide N-acetylglucosaminyltransferase GtfA subunit (Streptococcus agalactiae).